We begin with the raw amino-acid sequence, 189 residues long: Ribosome maturation factor RimM (189 aa).

A PRC barrel domain is found at Asp110–Phe189.

It belongs to the RimM family. In terms of assembly, binds ribosomal protein uS19.

It localises to the cytoplasm. Its function is as follows. An accessory protein needed during the final step in the assembly of 30S ribosomal subunit, possibly for assembly of the head region. Essential for efficient processing of 16S rRNA. May be needed both before and after RbfA during the maturation of 16S rRNA. It has affinity for free ribosomal 30S subunits but not for 70S ribosomes. This chain is Ribosome maturation factor RimM, found in Blochmanniella pennsylvanica (strain BPEN).